A 213-amino-acid chain; its full sequence is Orotate phosphoribosyltransferase (213 aa).

Lys-26 contributes to the 5-phospho-alpha-D-ribose 1-diphosphate binding site. 34–35 (FF) serves as a coordination point for orotate. 5-phospho-alpha-D-ribose 1-diphosphate contacts are provided by residues 72-73 (YK), Arg-99, Lys-100, Lys-103, His-105, and 124-132 (DDVITAGTA). Positions 128 and 156 each coordinate orotate.

The protein belongs to the purine/pyrimidine phosphoribosyltransferase family. PyrE subfamily. As to quaternary structure, homodimer. Mg(2+) is required as a cofactor.

It carries out the reaction orotidine 5'-phosphate + diphosphate = orotate + 5-phospho-alpha-D-ribose 1-diphosphate. It functions in the pathway pyrimidine metabolism; UMP biosynthesis via de novo pathway; UMP from orotate: step 1/2. Functionally, catalyzes the transfer of a ribosyl phosphate group from 5-phosphoribose 1-diphosphate to orotate, leading to the formation of orotidine monophosphate (OMP). The polypeptide is Orotate phosphoribosyltransferase (Serratia proteamaculans (strain 568)).